The following is a 327-amino-acid chain: GMP reductase (327 aa).

Cys-176 serves as the catalytic Thioimidate intermediate. 205-228 contributes to the NADP(+) binding site; it reads IIADGGIRTHGDIAKSIRFGASMV.

It belongs to the IMPDH/GMPR family. GuaC type 2 subfamily.

The enzyme catalyses IMP + NH4(+) + NADP(+) = GMP + NADPH + 2 H(+). Catalyzes the irreversible NADPH-dependent deamination of GMP to IMP. It functions in the conversion of nucleobase, nucleoside and nucleotide derivatives of G to A nucleotides, and in maintaining the intracellular balance of A and G nucleotides. This chain is GMP reductase, found in Streptococcus agalactiae serotype III (strain NEM316).